We begin with the raw amino-acid sequence, 1568 residues long: Myosin-2 (1568 aa).

The Myosin N-terminal SH3-like domain maps to 4-57 (EVGTRCWYPHKELGWIGAEVIKNEVKDGKYHLELSLEDDEVVSVDTEDLNDDKN). Positions 70–783 (EATEDLTSLS…MLAYLEKLRS (714 aa)) constitute a Myosin motor domain. Position 164–171 (164–171 (GESGAGKT)) interacts with ATP. Residues 443–523 (FIGVLDIYGF…LGILSLLDEE (81 aa)) are actin-binding. Residues 619–641 (KKAELEQNNPGNKKPGPARTVNR) are disordered. 6 consecutive IQ domains span residues 786–808 (MHNS…QYLK), 809–833 (ISQA…YHEM), 834–856 (KVHS…NVFN), 857–881 (VLIT…KREH), 882–904 (EYNA…TFLN), and 905–934 (TKRD…DAKS). A coiled-coil region spans residues 944–1088 (KLENKVIELT…ISRLQTAMSL (145 aa)). Positions 1089 to 1568 (GTVTTSVLPQ…VAQQVVQDGH (480 aa)) are non alpha-helical, tail domain. Residues 1223-1498 (AQVLTTIQKV…LRYVADIVKK (276 aa)) enclose the Dilute domain.

This sequence belongs to the TRAFAC class myosin-kinesin ATPase superfamily. Myosin family. Homodimer. Interacts with calmodulin (CMD1) and the myosin light chain MLC1 through its IQ repeats.

In terms of biological role, myosin heavy chain that is required for the cell cycle-regulated transport of various organelles and proteins for their segregation. Functions by binding with its tail domain to receptor proteins on organelles and exerting force with its N-terminal motor domain against actin filaments, thereby transporting its cargo along polarized actin cables. The polypeptide is Myosin-2 (MYO2) (Saccharomyces uvarum (strain ATCC 76518 / CBS 7001 / CLIB 283 / NBRC 10550 / MCYC 623 / NCYC 2669 / NRRL Y-11845) (Yeast)).